The sequence spans 454 residues: Epoxide hydrolase 1 (454 aa).

The chain crosses the membrane as a helical span at residues 1–21; that stretch reads MWLEILLASVLGFVIYWFVSK. Topologically, residues 22–454 are cytoplasmic; sequence DKEETLLLGD…RKFMGLLEQQ (433 aa). The active-site Nucleophile is Asp-226. Arg-294 carries the post-translational modification Dimethylated arginine. Residue Tyr-373 is the Proton donor of the active site. Residue His-430 is the Proton acceptor of the active site.

The protein belongs to the peptidase S33 family.

It is found in the microsome membrane. It localises to the endoplasmic reticulum membrane. The enzyme catalyses cis-stilbene oxide + H2O = (1R,2R)-hydrobenzoin. It carries out the reaction 1-(4-methoxyphenyl)-N-methyl-N-[(3-methyloxetan-3-yl)methyl]methanamine + H2O = 2-{[(4-methoxybenzyl)(methyl)amino]methyl}-2-methylpropane-1,3-diol. It catalyses the reaction 8,9-epoxy-(5Z,11Z,14Z)-eicosatrienoate + H2O = 8,9-dihydroxy-(5Z,11Z,14Z)-eicosatrienoate. The catalysed reaction is 11,12-epoxy-(5Z,8Z,14Z)-eicosatrienoate + H2O = 11,12-dihydroxy-(5Z,8Z,14Z)-eicosatrienoate. The enzyme catalyses 2-(5Z,8Z,11Z,14Z-eicosatetraenoyl)-glycerol + H2O = glycerol + (5Z,8Z,11Z,14Z)-eicosatetraenoate + H(+). Its activity is regulated as follows. Inhibited by 10-hydroxystearamide and methoxy-arachidonyl fluorophosphate. Functionally, biotransformation enzyme that catalyzes the hydrolysis of arene and aliphatic epoxides to less reactive and more water soluble dihydrodiols by the trans addition of water. May play a role in the metabolism of endogenous lipids such as epoxide-containing fatty acids. Metabolizes the abundant endocannabinoid 2-arachidonoylglycerol (2-AG) to free arachidonic acid (AA) and glycerol. Binds 20(S)-hydroxycholesterol (20(S)-OHC). The chain is Epoxide hydrolase 1 (EPHX1) from Sus scrofa (Pig).